A 287-amino-acid polypeptide reads, in one-letter code: 4-hydroxybenzoate octaprenyltransferase (287 aa).

Transmembrane regions (helical) follow at residues 22–42, 45–65, 95–115, 116–136, 140–160, 162–182, 214–234, 237–257, and 264–284; these read IGTY…SDGW, LQLL…GCVI, AINL…MLSW, STIY…FMKR, LPQL…FSEA, GEIP…TIAY, IGFL…ILAF, PYQL…LLIV, and CFQA…GIAI.

It belongs to the UbiA prenyltransferase family. Mg(2+) serves as cofactor.

Its subcellular location is the cell inner membrane. The enzyme catalyses all-trans-octaprenyl diphosphate + 4-hydroxybenzoate = 4-hydroxy-3-(all-trans-octaprenyl)benzoate + diphosphate. It participates in cofactor biosynthesis; ubiquinone biosynthesis. In terms of biological role, catalyzes the prenylation of para-hydroxybenzoate (PHB) with an all-trans polyprenyl group. Mediates the second step in the final reaction sequence of ubiquinone-8 (UQ-8) biosynthesis, which is the condensation of the polyisoprenoid side chain with PHB, generating the first membrane-bound Q intermediate 3-octaprenyl-4-hydroxybenzoate. This Colwellia psychrerythraea (strain 34H / ATCC BAA-681) (Vibrio psychroerythus) protein is 4-hydroxybenzoate octaprenyltransferase.